The following is a 70-amino-acid chain: Probable U6 snRNA-associated Sm-like protein (70 aa).

One can recognise a Sm domain in the interval 3–70; that stretch reads DPFCFLKMYL…ILFVGPRLLL (68 aa).

This sequence belongs to the snRNP Sm proteins family.

The protein localises to the nucleus. Binds specifically to the 3'-terminal U-tract of U6 snRNA. The polypeptide is Probable U6 snRNA-associated Sm-like protein (Encephalitozoon cuniculi (strain GB-M1) (Microsporidian parasite)).